A 1582-amino-acid polypeptide reads, in one-letter code: SET-binding protein (1582 aa).

4 disordered regions span residues Met1–Gly76, Ile124–Ala246, Leu278–Ser416, and Ser446–Glu513. The segment covering Glu18–Ser27 has biased composition (polar residues). Basic and acidic residues predominate over residues Gly57–Val74. Composition is skewed to polar residues over residues Ile126–Ser141 and Met213–Phe229. A compositionally biased stretch (low complexity) spans Leu278–Ser298. The segment covering Glu356–Tyr365 has biased composition (basic and acidic residues). Residues Asp368 to Asn388 show a composition bias toward polar residues. The segment covering Gly450–Glu465 has biased composition (basic and acidic residues). The segment at residues Lys575–Leu587 is a DNA-binding region (a.T hook 1). 2 disordered regions span residues Gly595–Arg617 and Arg709–Glu787. Positions Leu770–Glu787 are enriched in polar residues. Lys808 carries the N6-acetyllysine modification. Residues Ser845–Asp871 are compositionally biased toward polar residues. The segment at Ser845–Arg880 is disordered. The segment at residues Lys1007–Thr1019 is a DNA-binding region (a.T hook 2). Disordered regions lie at residues Val1128–Leu1155, Ser1182–Asn1215, Ala1236–Glu1265, Gln1429–Met1461, Leu1470–Ser1489, and Glu1507–Pro1582. Basic residues predominate over residues Arg1137–Lys1150. Positions Ser1182 to Lys1196 are enriched in basic and acidic residues. Basic residues predominate over residues Val1439 to Lys1448. Positions Lys1440–Gln1452 form a DNA-binding region, a.T hook 3. Pro residues-rich tracts occupy residues Pro1509–Pro1533 and Gln1546–Leu1559.

In terms of assembly, interacts with SET.

Its subcellular location is the nucleus. In Mus musculus (Mouse), this protein is SET-binding protein (Setbp1).